Here is a 136-residue protein sequence, read N- to C-terminus: MERTLVILKPDSVKRKLVGEIISRFEKRNFTILHLKMMNIDRELACEHYSHVKDKPFFNDMIDYITSGPVVVMVLSGYRVIEAVRSMVGATSNFDSKPGTIRGDYGYHRFENLIHASDSCESAEIEIKRFFPELDS.

ATP-binding residues include lysine 9, phenylalanine 57, arginine 85, threonine 91, arginine 102, and asparagine 112. The active-site Pros-phosphohistidine intermediate is histidine 115.

Belongs to the NDK family. As to quaternary structure, homotetramer. Mg(2+) serves as cofactor.

It localises to the cytoplasm. The enzyme catalyses a 2'-deoxyribonucleoside 5'-diphosphate + ATP = a 2'-deoxyribonucleoside 5'-triphosphate + ADP. It carries out the reaction a ribonucleoside 5'-diphosphate + ATP = a ribonucleoside 5'-triphosphate + ADP. Major role in the synthesis of nucleoside triphosphates other than ATP. The ATP gamma phosphate is transferred to the NDP beta phosphate via a ping-pong mechanism, using a phosphorylated active-site intermediate. The polypeptide is Nucleoside diphosphate kinase (Acetivibrio thermocellus (strain ATCC 27405 / DSM 1237 / JCM 9322 / NBRC 103400 / NCIMB 10682 / NRRL B-4536 / VPI 7372) (Clostridium thermocellum)).